We begin with the raw amino-acid sequence, 147 residues long: Protein phosphatase 1 regulatory subunit 14A (147 aa).

The segment covering 1–11 (MAAQRLGKRVL) has biased composition (basic residues). Positions 1 to 37 (MAAQRLGKRVLSKLQSPSRARGPGGSPGGLQKRHARV) are disordered. The residue at position 26 (Ser-26) is a Phosphoserine. The interval 35–120 (ARVTVKYDRR…LLVKLRGLHK (86 aa)) is inhibitory. Thr-38 carries the post-translational modification Phosphothreonine. A disordered region spans residues 118–147 (LHKQPGLRQPSPSGDGSLSPRQDRARTAPP). A compositionally biased stretch (polar residues) spans 127-137 (PSPSGDGSLSP). Phosphoserine occurs at positions 128, 134, and 136. Over residues 138–147 (RQDRARTAPP) the composition is skewed to basic and acidic residues.

The protein belongs to the PP1 inhibitor family. Phosphorylation of Thr-38 induces a conformation change. Detected in aorta smooth muscle and bladder.

The protein localises to the cytoplasm. Inhibitor of PPP1CA. Has over 1000-fold higher inhibitory activity when phosphorylated, creating a molecular switch for regulating the phosphorylation status of PPP1CA substrates and smooth muscle contraction. The polypeptide is Protein phosphatase 1 regulatory subunit 14A (CPI17) (Sus scrofa (Pig)).